A 464-amino-acid chain; its full sequence is Sensor histidine kinase Hik34 (464 aa).

The 215-residue stretch at 235-449 (ALTHEVRTPL…ILTIYLKCEQ (215 aa)) folds into the Histidine kinase domain. His-238 is subject to Phosphohistidine; by autocatalysis.

When expressed in E.coli autophosphorylates at 18 to 30 degrees Celsius; less phosphorylation occurs at 36 and none occurs at 42 or 48 degrees Celsius.

It catalyses the reaction ATP + protein L-histidine = ADP + protein N-phospho-L-histidine.. In terms of biological role, member of a two-component system Hik34/Rre1, controlling expression of at least 20 genes in response to hyperosmotic stress (0.5 M sorbitol) or salt (0.5 M NaCl). Represses expression of heat shock genes under normal growth conditions. Required for survival of long-term heat shock exposure. The protein is Sensor histidine kinase Hik34 of Synechocystis sp. (strain ATCC 27184 / PCC 6803 / Kazusa).